Consider the following 445-residue polypeptide: Tubulin beta-3 chain (445 aa).

Positions 11, 69, 138, 142, 143, 144, 204, and 226 each coordinate GTP. Glu-69 is a binding site for Mg(2+). Positions 417 to 426 (DLVSEYQQYQ) are enriched in polar residues. The tract at residues 417–445 (DLVSEYQQYQEASADDEADEFDEEEGDEE) is disordered. Over residues 429–445 (SADDEADEFDEEEGDEE) the composition is skewed to acidic residues.

The protein belongs to the tubulin family. Dimer of alpha and beta chains. A typical microtubule is a hollow water-filled tube with an outer diameter of 25 nm and an inner diameter of 15 nM. Alpha-beta heterodimers associate head-to-tail to form protofilaments running lengthwise along the microtubule wall with the beta-tubulin subunit facing the microtubule plus end conferring a structural polarity. Microtubules usually have 13 protofilaments but different protofilament numbers can be found in some organisms and specialized cells. Mg(2+) serves as cofactor.

Its subcellular location is the cytoplasm. The protein resides in the cytoskeleton. Functionally, tubulin is the major constituent of microtubules, a cylinder consisting of laterally associated linear protofilaments composed of alpha- and beta-tubulin heterodimers. Microtubules grow by the addition of GTP-tubulin dimers to the microtubule end, where a stabilizing cap forms. Below the cap, tubulin dimers are in GDP-bound state, owing to GTPase activity of alpha-tubulin. The chain is Tubulin beta-3 chain (TUBB3) from Oomycete-like sp. (strain MacKay2000).